The sequence spans 1805 residues: Kinesin-like protein KIF13A (1805 aa).

The Kinesin motor domain occupies 5 to 352 (KVKVAVRVRP…LRYADRAKRI (348 aa)). ATP is bound at residue 102–109 (GQTGSGKS). The stretch at 359–436 (NEDPNAKVIR…QLESMGISLE (78 aa)) forms a coiled coil. Residues 469 to 519 (HTRVGADTSQDIQLFGIGIQPQHCEIDIASDGDVTLTPKENARSCVNGTLV) form the FHA domain. A compositionally biased stretch (basic and acidic residues) spans 556 to 567 (EKETGPPEHDLD). Disordered stretches follow at residues 556–575 (EKET…ASSE) and 633–656 (QQLS…SQTA). Coiled-coil stretches lie at residues 602 to 775 (VQVL…LYGK) and 1100 to 1138 (DALI…EQWV). Ser-636 carries the phosphoserine modification. Ser-1287 is subject to Phosphoserine. Over residues 1385-1396 (TPNVHNVSSSRP) the composition is skewed to polar residues. The segment at 1385–1404 (TPNVHNVSSSRPDLSGFDED) is disordered. Phosphoserine occurs at positions 1454, 1481, 1490, and 1494. The tract at residues 1507 to 1531 (PSGSNGSSMPVEHNSKREKKIDSEE) is disordered. Residues 1518 to 1547 (EHNSKREKKIDSEEEENELEAINRKLISSQ) adopt a coiled-coil conformation. Basic and acidic residues predominate over residues 1519 to 1528 (HNSKREKKID). Residues Ser-1529 and Ser-1572 each carry the phosphoserine modification. Residues 1612–1621 (MVVPSSDSSD) are compositionally biased toward low complexity. Residues 1612–1645 (MVVPSSDSSDQLAIQTKDADSTEHSTPSLVHDFR) are disordered. A phosphoserine mark is found at Ser-1648 and Ser-1698. The tract at residues 1749-1779 (GLTDSSAGELSSRRSLPNKTGGKTVSDGLHH) is disordered. Polar residues predominate over residues 1751–1771 (TDSSAGELSSRRSLPNKTGGK).

The protein belongs to the TRAFAC class myosin-kinesin ATPase superfamily. Kinesin family. In terms of assembly, interacts with AP2B1. Interacts with ZFYVE26. Interacts with AP1G1 and AP1G2. In terms of tissue distribution, widely expressed, with highest levels in heart, brain and skeletal muscle.

The protein resides in the cytoplasm. It is found in the cytoskeleton. Its subcellular location is the microtubule organizing center. It localises to the centrosome. The protein localises to the midbody. The protein resides in the endosome membrane. It is found in the golgi apparatus membrane. Plus end-directed microtubule-dependent motor protein involved in intracellular transport and regulating various processes such as mannose-6-phosphate receptor (M6PR) transport to the plasma membrane, endosomal sorting during melanosome biogenesis and cytokinesis. Mediates the transport of M6PR-containing vesicles from trans-Golgi network to the plasma membrane via direct interaction with the AP-1 complex. During melanosome maturation, required for delivering melanogenic enzymes from recycling endosomes to nascent melanosomes by creating peripheral recycling endosomal subdomains in melanocytes. Also required for the abscission step in cytokinesis: mediates translocation of ZFYVE26, and possibly TTC19, to the midbody during cytokinesis. This Homo sapiens (Human) protein is Kinesin-like protein KIF13A (KIF13A).